The following is a 280-amino-acid chain: MKTNYEIRYAAHPEDAKSYDTARIRRDFLIEKIFVPNEVNMVYSMYDRMVVGGALPVGEVLTLEAIDPLKAPFFLTRREMGIYNVGGPGVVKAGDAVFELDYKEALYLGSGDRVVTFESKDASNPAKFYFNSLTAHRNYPDRKVTKADAVVAEMGSLEGSNHRNINKMLVNQVLPTCQLQMGMTELAPGSVWNTMPAHVHSRRMEAYFYFEIPEEHAICHFMGEVDETRHVWMKGDQAVLSPEWSIHSAAATHNYTFIWGMGGENLDYGDQDFSLITDLK.

Positions 198, 200, 205, and 247 each coordinate Zn(2+).

The protein belongs to the KduI family. Requires Zn(2+) as cofactor.

It catalyses the reaction 5-dehydro-4-deoxy-D-glucuronate = 3-deoxy-D-glycero-2,5-hexodiulosonate. It participates in glycan metabolism; pectin degradation; 2-dehydro-3-deoxy-D-gluconate from pectin: step 4/5. Functionally, catalyzes the isomerization of 5-dehydro-4-deoxy-D-glucuronate to 3-deoxy-D-glycero-2,5-hexodiulosonate. In Bacteroides thetaiotaomicron (strain ATCC 29148 / DSM 2079 / JCM 5827 / CCUG 10774 / NCTC 10582 / VPI-5482 / E50), this protein is 4-deoxy-L-threo-5-hexosulose-uronate ketol-isomerase 1 (kduI1).